The following is a 632-amino-acid chain: 1-deoxy-D-xylulose-5-phosphate synthase (632 aa).

Residues His-79 and 120-122 (GHA) each bind thiamine diphosphate. Asp-152 lines the Mg(2+) pocket. Residues 153-154 (GA), Asn-181, Phe-293, and Glu-377 contribute to the thiamine diphosphate site. Asn-181 provides a ligand contact to Mg(2+).

This sequence belongs to the transketolase family. DXPS subfamily. As to quaternary structure, homodimer. Mg(2+) serves as cofactor. Thiamine diphosphate is required as a cofactor.

The enzyme catalyses D-glyceraldehyde 3-phosphate + pyruvate + H(+) = 1-deoxy-D-xylulose 5-phosphate + CO2. It participates in metabolic intermediate biosynthesis; 1-deoxy-D-xylulose 5-phosphate biosynthesis; 1-deoxy-D-xylulose 5-phosphate from D-glyceraldehyde 3-phosphate and pyruvate: step 1/1. Catalyzes the acyloin condensation reaction between C atoms 2 and 3 of pyruvate and glyceraldehyde 3-phosphate to yield 1-deoxy-D-xylulose-5-phosphate (DXP). This is 1-deoxy-D-xylulose-5-phosphate synthase from Parabacteroides distasonis (strain ATCC 8503 / DSM 20701 / CIP 104284 / JCM 5825 / NCTC 11152).